Here is a 393-residue protein sequence, read N- to C-terminus: Bifunctional enzyme Fae/Hps (393 aa).

The tract at residues 1 to 161 is formaldehyde-activating enzyme; sequence MYLVGEALIG…YEKDRAAHGI (161 aa). His-17 acts as the Proton donor in catalysis. 5 residues coordinate substrate: Asp-19, Leu-48, Lys-66, Thr-68, and Gln-83. The interval 162–393 is 3-hexulose-6-phosphate synthase; that stretch reads MGFKVQRLWD…IDQFRIMTDF (232 aa).

In the N-terminal section; belongs to the formaldehyde-activating enzyme family. The protein in the C-terminal section; belongs to the HPS/KGPDC family. HPS subfamily.

It carries out the reaction 5,6,7,8-tetrahydromethanopterin + formaldehyde = 5,10-methylenetetrahydromethanopterin + H2O. The enzyme catalyses D-ribulose 5-phosphate + formaldehyde = D-arabino-hex-3-ulose 6-phosphate. Its pathway is carbohydrate biosynthesis; D-ribose 5-phosphate biosynthesis. Its function is as follows. Catalyzes the condensation of formaldehyde with tetrahydromethanopterin (H(4)MPT) to 5,10-methylenetetrahydromethanopterin. Functionally, catalyzes the reversible formation of ribulose-5-phosphate and formaldehyde from 3-hexulose-6-phosphate. The protein is Bifunctional enzyme Fae/Hps of Methanoregula boonei (strain DSM 21154 / JCM 14090 / 6A8).